The following is a 398-amino-acid chain: Exodeoxyribonuclease 7 large subunit (398 aa).

It belongs to the XseA family. As to quaternary structure, heterooligomer composed of large and small subunits.

Its subcellular location is the cytoplasm. It carries out the reaction Exonucleolytic cleavage in either 5'- to 3'- or 3'- to 5'-direction to yield nucleoside 5'-phosphates.. Bidirectionally degrades single-stranded DNA into large acid-insoluble oligonucleotides, which are then degraded further into small acid-soluble oligonucleotides. The polypeptide is Exodeoxyribonuclease 7 large subunit (Chlorobaculum tepidum (strain ATCC 49652 / DSM 12025 / NBRC 103806 / TLS) (Chlorobium tepidum)).